A 304-amino-acid polypeptide reads, in one-letter code: MNKEIQQANHSKNINKPFTDKDSIRVSVLSEALPYIQRFANKRIVIKYGGSAMADKTLQNAVFRDLALLSSVGVQIVVVHGGGPEINQWLEKLGIKPVFLDGLRITDTETMDVVEMVLTGRVNKQIVSGINNHGRLAVGLCGIDGGLIEARTLGGGSHGLVGEVAKVNTKILSPLLEEGYVPVISSVANSSDGRSHNINADTVAGELAAALGAEKLILLTDTPGILRNENDPSSLIEKIRLSEARELIDQGIVKAGMKPKVECCIRSLAQGVNAAHIIDGRTPHSLLLEVFTDAGIGTMVMGRG.

Substrate-binding positions include glycine 82 to glycine 83, arginine 104, and asparagine 197.

The protein belongs to the acetylglutamate kinase family. ArgB subfamily.

It localises to the cytoplasm. The enzyme catalyses N-acetyl-L-glutamate + ATP = N-acetyl-L-glutamyl 5-phosphate + ADP. It functions in the pathway amino-acid biosynthesis; L-arginine biosynthesis; N(2)-acetyl-L-ornithine from L-glutamate: step 2/4. Catalyzes the ATP-dependent phosphorylation of N-acetyl-L-glutamate. The sequence is that of Acetylglutamate kinase from Prochlorococcus marinus (strain NATL1A).